The chain runs to 243 residues: Protein IN2-1 (243 aa).

Residues 1–26 form a disordered region; it reads MAAAAGPSSSVKESLPPALGSTSQPP. The GST N-terminal domain maps to 31–112; that stretch reads GTTRLYICYF…YIDSNFDGPA (82 aa). Residues Lys-70, Val-84, and 96–97 contribute to the glutathione site; that span reads ES. The 132-residue stretch at 109–240 folds into the GST C-terminal domain; that stretch reads DGPALLPEDA…FLLDLAKSHL (132 aa).

It belongs to the GST superfamily. HSP26 family. Leaves and roots. It is more strongly induced in the leaves relative to the roots.

This is Protein IN2-1 (IN2-1) from Zea mays (Maize).